A 248-amino-acid polypeptide reads, in one-letter code: N-acylneuraminate-9-phosphatase (248 aa).

D12 is a binding site for Mg(2+). Residues L13, D14, T131, N132, and K164 each coordinate phosphate. D14 is a binding site for Mg(2+). D189 serves as a coordination point for Mg(2+).

This sequence belongs to the HAD-like hydrolase superfamily. NANP family. The cofactor is Mg(2+).

It carries out the reaction N-acetylneuraminate 9-phosphate + H2O = N-acetylneuraminate + phosphate. The catalysed reaction is N-glycoloylneuraminate 9-phosphate + H2O = N-glycoloylneuraminate + phosphate. It functions in the pathway amino-sugar metabolism; N-acetylneuraminate biosynthesis. Inhibited by calcium. Inhibited by vanadate, sodium orthovanadate and phosphonate. In terms of biological role, catalyzes the dephosphorylation of N-acylneuraminate 9-phosphate (Neu5Ac-9-P) to N-acetylneuraminic acid (Neu5Ac or sialic acid). Can also use N-glycoloylneuraminate 9-phosphate as substrate. The polypeptide is N-acylneuraminate-9-phosphatase (Rattus norvegicus (Rat)).